A 644-amino-acid polypeptide reads, in one-letter code: 1-deoxy-D-xylulose-5-phosphate synthase (644 aa).

Residues His-78 and 120-122 (GHA) contribute to the thiamine diphosphate site. A Mg(2+)-binding site is contributed by Asp-149. Thiamine diphosphate is bound by residues 150 to 151 (AA), Asn-178, and Glu-373. Residue Asn-178 coordinates Mg(2+).

It belongs to the transketolase family. DXPS subfamily. As to quaternary structure, homodimer. It depends on Mg(2+) as a cofactor. Thiamine diphosphate serves as cofactor.

The enzyme catalyses D-glyceraldehyde 3-phosphate + pyruvate + H(+) = 1-deoxy-D-xylulose 5-phosphate + CO2. It functions in the pathway metabolic intermediate biosynthesis; 1-deoxy-D-xylulose 5-phosphate biosynthesis; 1-deoxy-D-xylulose 5-phosphate from D-glyceraldehyde 3-phosphate and pyruvate: step 1/1. Its function is as follows. Catalyzes the acyloin condensation reaction between C atoms 2 and 3 of pyruvate and glyceraldehyde 3-phosphate to yield 1-deoxy-D-xylulose-5-phosphate (DXP). This Chlamydia caviae (strain ATCC VR-813 / DSM 19441 / 03DC25 / GPIC) (Chlamydophila caviae) protein is 1-deoxy-D-xylulose-5-phosphate synthase.